A 577-amino-acid polypeptide reads, in one-letter code: Beta-glucosidase 30 (577 aa).

Residues 1 to 23 (MAKGSWFFIILFIISMLENMINS) form the signal peptide. Residues Gln-45, His-148, and 193 to 194 (NE) each bind a beta-D-glucoside. Catalysis depends on Glu-194, which acts as the Proton donor. An intrachain disulfide couples Cys-213 to Cys-221. N-linked (GlcNAc...) asparagine glycosylation is present at Asn-328. Tyr-338 serves as a coordination point for a beta-D-glucoside. A glycan (N-linked (GlcNAc...) asparagine) is linked at Asn-368. A beta-D-glucoside contacts are provided by residues Glu-410, Trp-460, 467 to 468 (EW), and Phe-476. The active-site Nucleophile is the Glu-410. N-linked (GlcNAc...) asparagine glycans are attached at residues Asn-524 and Asn-544.

The protein belongs to the glycosyl hydrolase 1 family.

The enzyme catalyses Hydrolysis of terminal, non-reducing beta-D-glucosyl residues with release of beta-D-glucose.. This is Beta-glucosidase 30 from Arabidopsis thaliana (Mouse-ear cress).